Consider the following 256-residue polypeptide: Protein YABBY 4 (256 aa).

The C4-type zinc finger occupies 30-57 (CNCCDTILAVGVPCSSLFKTVTVRCGHC). The segment at 127–168 (SCASNAPAMQMPPAKPVQQEPELPKNAPASANRPPEKRQRVP) is disordered.

It belongs to the YABBY family. As to expression, preferentially expressed in immature organs containing meristems and organ primordia. Expressed in phloem of developing vascular tissues of young seedling shoots. Expressed in the phloem of midvein vasculature of young leaves. Does not show polar expression pattern in leaf primordia.

It is found in the nucleus. Its function is as follows. Seems to be associated with phloem cell differentiation. This is Protein YABBY 4 (YAB4) from Oryza sativa subsp. japonica (Rice).